A 514-amino-acid chain; its full sequence is Cilia- and flagella-associated protein 53 (514 aa).

Coiled-coil stretches lie at residues 91–148 (IINI…RQDF) and 203–474 (KLWE…REFE).

It belongs to the CFAP53 family. Microtubule inner protein component of sperm flagellar doublet microtubules. Interacts with PIERCE1 and PIERCE2; the interactions link outer dynein arms docking complex (ODA-DC) to the internal microtubule inner proteins (MIP) in cilium axoneme. Interacts with CCDC38. Interacts with CCDC42 and IFT88. Interacts with centriolar satellite proteins PIBF1/CEP90 and PCM1. Interacts with dyneins DNAIC1, DNAIC2 AND DNAH11 and with ODA-DC component ODAD4/TTC25. In terms of tissue distribution, expressed in skin fibroblasts (at protein level). Expressed in nasal respiratory epithelial cells (at protein level). Expressed in airway epithelial cells.

It localises to the cytoplasm. The protein localises to the cytoskeleton. The protein resides in the cilium axoneme. It is found in the flagellum axoneme. Its subcellular location is the microtubule organizing center. It localises to the centrosome. The protein localises to the centriole. The protein resides in the centriolar satellite. It is found in the spindle pole. Its subcellular location is the cell projection. It localises to the cilium. Functionally, microtubule inner protein (MIP) part of the dynein-decorated doublet microtubules (DMTs) in cilia axoneme, which is required for motile cilia beating. Regulates motility patterns of both 9+0 and 9+2 motile cilia through differential localization and recruitment of axonemal dynein components. Required for centriolar satellite integrity and non-motile cilium assembly. Required for motile cilium formation. Through its role in the beating of primary cilia, involved in the establishment of organ laterality during embryogenesis. Required for sperm flagellum biogenesis and is essential for male fertility. The chain is Cilia- and flagella-associated protein 53 from Homo sapiens (Human).